A 362-amino-acid polypeptide reads, in one-letter code: Adenosine deaminase (362 aa).

Zn(2+) is bound by residues His19 and His21. His21, Asp23, and Gly181 together coordinate substrate. His208 serves as a coordination point for Zn(2+). Catalysis depends on Glu211, which acts as the Proton donor. Residue Asp300 participates in Zn(2+) binding.

Belongs to the metallo-dependent hydrolases superfamily. Adenosine and AMP deaminases family. Adenosine deaminase subfamily. It depends on Zn(2+) as a cofactor.

It catalyses the reaction adenosine + H2O + H(+) = inosine + NH4(+). It carries out the reaction 2'-deoxyadenosine + H2O + H(+) = 2'-deoxyinosine + NH4(+). Functionally, catalyzes the hydrolytic deamination of adenosine and 2-deoxyadenosine. The chain is Adenosine deaminase from Mycobacterium sp. (strain JLS).